An 852-amino-acid chain; its full sequence is Probable LRR receptor-like serine/threonine-protein kinase At1g05700 (852 aa).

Residues 1–25 form the signal peptide; that stretch reads MEEFRFLYLIYSAAFALCLVVSVLA. At 26 to 510 the chain is on the extracellular side; that stretch reads QDQSGFISID…SCRKSNSKKL (485 aa). Residues Asn138, Asn182, Asn231, Asn240, Asn258, Asn293, Asn400, Asn415, and Asn431 are each glycosylated (N-linked (GlcNAc...) asparagine). LRR repeat units follow at residues 410–432, 434–457, and 458–479; these read RITS…FSNL, MIQE…SKLK, and FLRV…ELLE. Asn466 carries an N-linked (GlcNAc...) asparagine glycan. Residues 511-531 traverse the membrane as a helical segment; it reads VIPLVASFAALFILLLLSGVF. Topologically, residues 532 to 852 are cytoplasmic; the sequence is WRIRNRRNKS…LQREESNKNY (321 aa). Position 561 is a phosphothreonine (Thr561). Residues 570 to 843 enclose the Protein kinase domain; that stretch reads NNFGQVLGKG…HIVRGLNECL (274 aa). ATP is bound by residues 576–584 and Lys597; that span reads LGKGGFGTV. At Tyr642 the chain carries Phosphotyrosine. Asp693 (proton acceptor) is an active-site residue. 2 positions are modified to phosphoserine: Ser697 and Ser727. Residues Thr728 and Thr733 each carry the phosphothreonine modification.

This sequence belongs to the protein kinase superfamily. Ser/Thr protein kinase family.

The protein localises to the membrane. It carries out the reaction L-seryl-[protein] + ATP = O-phospho-L-seryl-[protein] + ADP + H(+). The enzyme catalyses L-threonyl-[protein] + ATP = O-phospho-L-threonyl-[protein] + ADP + H(+). This is Probable LRR receptor-like serine/threonine-protein kinase At1g05700 from Arabidopsis thaliana (Mouse-ear cress).